The primary structure comprises 273 residues: 4-hydroxy-tetrahydrodipicolinate reductase (273 aa).

Residues 12–17 (GAGGRM) and Glu-38 contribute to the NAD(+) site. Arg-39 is an NADP(+) binding site. Residues 102–104 (GTT) and 126–129 (AANF) each bind NAD(+). His-159 functions as the Proton donor/acceptor in the catalytic mechanism. Position 160 (His-160) interacts with (S)-2,3,4,5-tetrahydrodipicolinate. Lys-163 acts as the Proton donor in catalysis. 169 to 170 (GT) lines the (S)-2,3,4,5-tetrahydrodipicolinate pocket.

The protein belongs to the DapB family. As to quaternary structure, homotetramer.

Its subcellular location is the cytoplasm. The catalysed reaction is (S)-2,3,4,5-tetrahydrodipicolinate + NAD(+) + H2O = (2S,4S)-4-hydroxy-2,3,4,5-tetrahydrodipicolinate + NADH + H(+). It carries out the reaction (S)-2,3,4,5-tetrahydrodipicolinate + NADP(+) + H2O = (2S,4S)-4-hydroxy-2,3,4,5-tetrahydrodipicolinate + NADPH + H(+). It participates in amino-acid biosynthesis; L-lysine biosynthesis via DAP pathway; (S)-tetrahydrodipicolinate from L-aspartate: step 4/4. Functionally, catalyzes the conversion of 4-hydroxy-tetrahydrodipicolinate (HTPA) to tetrahydrodipicolinate. This chain is 4-hydroxy-tetrahydrodipicolinate reductase, found in Shigella boydii serotype 18 (strain CDC 3083-94 / BS512).